Here is a 217-residue protein sequence, read N- to C-terminus: Non-structural protein NS3 (217 aa).

Belongs to the orbivirus NS3 family.

Functionally, may play a role in the release of virions from infected cells. This is Non-structural protein NS3 (Segment-10) from Camelus dromedarius (Dromedary).